The chain runs to 323 residues: MPADHIPALALAGPTASGKTAAAFAIADALAPRLPVEIISVDSALVYRGMDIGTAKPTPAEQARVPHHLIDIRDPLQAYSAAEFVQDATRLIGEIRARGALPLLVGGTMLYFKALFDGIDDMPPADAAVRARLEAQAAAIGWSGMHAELARVDPPTAARLAPGDSQRIQRALEVWHVSGRPLSSFHTTKTVAASDRPMSAASLFSLEPHDRAWLHGRIAERFHAMLAAGFLDEVLRLRARGDLHAELPSMRCVGYRQAWESLDGLYPMSSLPERGIAATRQLAKRQITWLRSMPQRHSIACDAPDATAQLVQAVRARVWGGSA.

An ATP-binding site is contributed by 13 to 20; sequence GPTASGKT. Position 15–20 (15–20) interacts with substrate; the sequence is TASGKT. Interaction with substrate tRNA regions lie at residues 42–45, 166–170, 251–256, and 284–291; these read DSAL, QRIQR, RCVGYR, and KRQITWLR.

It belongs to the IPP transferase family. Monomer. It depends on Mg(2+) as a cofactor.

The enzyme catalyses adenosine(37) in tRNA + dimethylallyl diphosphate = N(6)-dimethylallyladenosine(37) in tRNA + diphosphate. Functionally, catalyzes the transfer of a dimethylallyl group onto the adenine at position 37 in tRNAs that read codons beginning with uridine, leading to the formation of N6-(dimethylallyl)adenosine (i(6)A). The protein is tRNA dimethylallyltransferase of Acidovorax sp. (strain JS42).